We begin with the raw amino-acid sequence, 835 residues long: MAAEEALKTVDQYKTEIERLTKELTETTHEKIQAAEYGLVVLEEKLTLKQQYDELEAEYDGLKQELEQLREAFGQSFSIHRKVAEDGETREETLLQESASKEAYYLNKILEMQNELKQSRAVVTNVQAENERLSAVVQELKENNEMVELQRIRMKDEIREYKFREARLLQDYTELEEENITLQKLVSTLKQNQVEYEGLKHEIKRFEEETVLLNSQLEDAIRLKEIAEHQLEEALETLKNEREQKNNLRKELSQYINLSDSHISISVDGLKFAEDGSEPNNDDKMNGHIHGPLGKLNGDYRTPTTRKGESLHPVSDLFSELNISEIQKLKQQLIQVEREKAILLANLQESQTQLEHTKGALTEQHERVHRLTEHVNAMRGLQNSKEIKAELDCEKGRNSAEEAHDYEVDINGLEILECKYRVAVTEVIDLKAEIKALKEKYNKSVENYTEEKTKYESKIQMYDEQVTNLEKTSKESGEKMAHMEKELQKMTGIANENHNTLNTAQDELVTFSEELAQLYHHVCLCNNETPNRVMLDYYRQSRVTRSGSLKGPDDPRGLLSPRLSRRGVSSPVESRTSSEPVSKENTETSKEPSPTKTPTISPVITAPPSSPVLDTSDIRKEPMNIYNLNAIIRDQIKHLQKAVDRSLQLSRQRAAARELAPMIDKDKEALMEEILKLKSLLSTKREQIATLRAVLKANKQTAEVALANLKNKYENEKAMVTETMTKLRNELKALKEDAATFSSLRAMFATRCDEYVTQLDEMQRQLAAAEDEKKTLNTLLRMAIQQKLALTQRLEDLEFDHEQSRRSKGKLGKSKIGSPKIVSSLLPPYRHSAHN.

Residues 1–264 adopt a coiled-coil conformation; the sequence is MAAEEALKTV…YINLSDSHIS (264 aa). The tract at residues 278 to 297 is disordered; the sequence is EPNNDDKMNGHIHGPLGKLN. Positions 320-519 form a coiled coil; it reads ELNISEIQKL…TFSEELAQLY (200 aa). Disordered stretches follow at residues 545–616 and 800–835; these read RSGS…LDTS and DHEQ…SAHN. Residues 557–572 are compositionally biased toward low complexity; that stretch reads GLLSPRLSRRGVSSPV. Over residues 581-590 the composition is skewed to basic and acidic residues; sequence VSKENTETSK. Low complexity predominate over residues 591-604; that stretch reads EPSPTKTPTISPVI. Positions 663 to 803 form a coiled coil; that stretch reads IDKDKEALME…LEDLEFDHEQ (141 aa). The segment at 663–803 is interaction with RAB6A; the sequence is IDKDKEALME…LEDLEFDHEQ (141 aa).

The protein belongs to the BicD family. As to quaternary structure, interacts with RAB6A. Interacts (via C-terminus) with RAB6B (GTP-bound); the interaction is direct. Interacts with CLIP-115 and KIFC2. As to expression, expressed in the brain, heart and skeletal muscle.

It is found in the golgi apparatus. Its function is as follows. Regulates coat complex coatomer protein I (COPI)-independent Golgi-endoplasmic reticulum transport by recruiting the dynein-dynactin motor complex. The sequence is that of Protein bicaudal D homolog 1 (Bicd1) from Mus musculus (Mouse).